We begin with the raw amino-acid sequence, 131 residues long: Proteinase inhibitor (131 aa).

A signal peptide spans 1–26; that stretch reads MSASAKLSRMVCLLCGFFSTGISMAS. A disulfide bridge connects residues Cys-51 and Cys-74.

It belongs to the protease inhibitor I38 family.

It localises to the periplasm. Functionally, inhibitor of the alkaline protease. It forms a non-covalent bond with the protease and may prevent its autocatalytic cleavage in the periplasm. The protein is Proteinase inhibitor (inh) of Pseudomonas aeruginosa (strain ATCC 15692 / DSM 22644 / CIP 104116 / JCM 14847 / LMG 12228 / 1C / PRS 101 / PAO1).